The following is a 401-amino-acid chain: Voltage-gated potassium channel subunit beta-3 (401 aa).

Polar residues-rich tracts occupy residues 1–14 (MQVS…TLRS) and 32–41 (GVSMAQTKQR). The interval 1 to 49 (MQVSFACTEQTLRSRTSEDRLCPSRPSGGQNGVSMAQTKQRTPPMGAKN) is disordered. T90, W91, Q97, and D119 together coordinate NADP(+). The Proton donor/acceptor role is filled by Y124. NADP(+)-binding residues include N192, S222, R223, Q248, W277, S278, P279, L280, A281, C282, K288, R298, G357, S359, Q363, E366, and N367.

Belongs to the shaker potassium channel beta subunit family. Forms heteromultimeric complex with alpha subunits. Identified in potassium channel complexes containing KCNA1 and KCNA2.

Its subcellular location is the cytoplasm. In terms of biological role, regulatory subunit of the voltage-gated potassium (Kv) channels composed of pore-forming and potassium-conducting alpha subunits and of regulatory beta subunit. The beta-3/KCNAB3 subunit may mediate closure of potassium channels. Increases and accelerates inactivation of Kv1.1/KCNA1 and Kv2.2/KCNA2 subunit-containing channels. May display nicotinamide adenine dinucleotide phosphate (NADPH)-dependent aldoketoreductase activity. The binding of oxidized and reduced NADP(H) cofactors may be required for the regulation of potassium channel activity. The polypeptide is Voltage-gated potassium channel subunit beta-3 (kcnab3) (Xenopus laevis (African clawed frog)).